The following is a 537-amino-acid chain: Cytoplasmic dynein 2 intermediate chain 2 (537 aa).

The residue at position 15 (Ser-15) is a Phosphoserine. The interval 80-93 (RTHADAQVQTEAPE) is DYNLL2 binding. Positions 107–132 (LRLEAFLRRVEAMVIRELNNNWQSHA) are DYNLRB1 binding. WD repeat units follow at residues 216–256 (EVPS…DPLL), 265–309 (THTD…QLRL), 391–431 (PHGG…PLTS), 434–474 (LSHK…QKPT), and 481–521 (QDGS…TEQG).

Belongs to the dynein light intermediate chain family. In terms of assembly, the cytoplasmic dynein 2 complex consists of two catalytic heavy chains (HCs) and a number of non-catalytic subunits presented by intermediate chains (ICs), light intermediate chains (LICs) and light chains (LCs). Among them, a heavy chain (DYNC2H1), two intermediate chains (DYNC2I2 and DYNC2I1), a light intermediate chain (DYNC2LI1), and a light chain (DYNLT2B) are unique to the cytoplasmic dynein complex 2, but a subset of the light chains are also shared by dynein-1 and dynein-2 complexes. Interacts with DYNC2I1; their C-terminal domains each bind a copy of the heavy chain, and their extended N-terminal regions are held together by an array of light chain dimers. Interacts with DYNLL2; this interaction is essential for dynein-2-mediated retrograde trafficking of ciliary proteins. Interacts with DYNLRB1; this interaction is essential for dynein-2-mediated retrograde trafficking of ciliary proteins. Interacts (via the WD domains) with MAP3K7 and TAB3. Interacts (via WD domains) with TAB2 (via C-terminus). Interacts (via WD domains) with TRAF6 (via TRAF-type domains). As to expression, expressed in brain, thymus, heart, lung, liver, spleen, kidney, testis and intestine.

Its subcellular location is the cytoplasm. It is found in the cytoskeleton. It localises to the cilium basal body. The protein resides in the cilium axoneme. The protein localises to the cell projection. Its subcellular location is the cilium. It is found in the microtubule organizing center. It localises to the centrosome. The protein resides in the filopodium. Its function is as follows. Acts as one of several non-catalytic accessory components of the cytoplasmic dynein 2 complex (dynein-2 complex), a motor protein complex that drives the movement of cargos along microtubules within cilia and flagella in concert with the intraflagellar transport (IFT) system. DYNC2I2 plays a major role in retrograde ciliary protein trafficking and in ciliogenesis. Required also to maintain a functional transition zone. In terms of biological role, acts as a negative regulator of the Toll-like and IL-1R receptor signaling pathways. Inhibits the MAP3K7-induced NF-kappa-B activation pathway. Inhibits MAP3K7 phosphorylation at 'Thr-184' and 'Thr-187' upon Il-1 beta stimulation. The sequence is that of Cytoplasmic dynein 2 intermediate chain 2 (Dync2i2) from Mus musculus (Mouse).